Consider the following 412-residue polypeptide: Argininosuccinate synthase (412 aa).

Residue 8-16 (AYSGGLDTS) participates in ATP binding. Y87 contacts L-citrulline. Residue G117 participates in ATP binding. The L-aspartate site is built by T119, N123, and D124. N123 is an L-citrulline binding site. L-citrulline is bound by residues R127, S175, E259, and Y271.

This sequence belongs to the argininosuccinate synthase family. Type 1 subfamily. In terms of assembly, homotetramer.

Its subcellular location is the cytoplasm. The catalysed reaction is L-citrulline + L-aspartate + ATP = 2-(N(omega)-L-arginino)succinate + AMP + diphosphate + H(+). Its pathway is amino-acid biosynthesis; L-arginine biosynthesis; L-arginine from L-ornithine and carbamoyl phosphate: step 2/3. The protein is Argininosuccinate synthase of Clavibacter michiganensis subsp. michiganensis (strain NCPPB 382).